The chain runs to 59 residues: MAKLKITLKKSLIGRKKDHIATVNALGLKKIGKVVEHEDNPQIKGMIKKVSYLLEVEEV.

It belongs to the universal ribosomal protein uL30 family. In terms of assembly, part of the 50S ribosomal subunit.

This chain is Large ribosomal subunit protein uL30, found in Clostridium kluyveri (strain ATCC 8527 / DSM 555 / NBRC 12016 / NCIMB 10680 / K1).